A 209-amino-acid chain; its full sequence is MVKFLEKVGGYARDVLESAKYIGQGMGVVFDHMRRKPVTVQYPYEKLIPSERFRGRIHFERPKCISCEVCVRVCPINLPVVDYEFNKETKKKELNSYSIDFGVCIFCGNCVEYCPTSCLSMTEEYELSVYDRHELNYDDVALGRLPTRVTDDPVVRPIRELAYLPKGVMDGHLEDPGSRRAGELPEEIVARLRPADHSSGTDANKKEGE.

2 4Fe-4S ferredoxin-type domains span residues 55–84 and 95–124; these read GRIH…VDYE and NSYS…MTEE. The [4Fe-4S] cluster site is built by Cys-64, Cys-67, Cys-70, Cys-74, Cys-104, Cys-107, Cys-110, and Cys-114.

It belongs to the complex I 23 kDa subunit family. As to quaternary structure, NDH-1 is composed of at least 11 different subunits. It depends on [4Fe-4S] cluster as a cofactor.

The protein localises to the cell inner membrane. It carries out the reaction a plastoquinone + NADH + (n+1) H(+)(in) = a plastoquinol + NAD(+) + n H(+)(out). It catalyses the reaction a plastoquinone + NADPH + (n+1) H(+)(in) = a plastoquinol + NADP(+) + n H(+)(out). Functionally, NDH-1 shuttles electrons from an unknown electron donor, via FMN and iron-sulfur (Fe-S) centers, to quinones in the respiratory and/or the photosynthetic chain. The immediate electron acceptor for the enzyme in this species is believed to be plastoquinone. Couples the redox reaction to proton translocation, and thus conserves the redox energy in a proton gradient. The protein is NAD(P)H-quinone oxidoreductase subunit I of Gloeobacter violaceus (strain ATCC 29082 / PCC 7421).